The chain runs to 102 residues: MNKIRKGDEVIVLTGKDKGKRGTVQAVQGDKVVVEGVNVAKKHARPNPMLGTTGGVVDKLMPLHISNVALVDANGKPSRVGIKVEDGKRVRVLKTTGAVLAA.

This sequence belongs to the universal ribosomal protein uL24 family. As to quaternary structure, part of the 50S ribosomal subunit.

Functionally, one of two assembly initiator proteins, it binds directly to the 5'-end of the 23S rRNA, where it nucleates assembly of the 50S subunit. In terms of biological role, one of the proteins that surrounds the polypeptide exit tunnel on the outside of the subunit. This Cupriavidus metallidurans (strain ATCC 43123 / DSM 2839 / NBRC 102507 / CH34) (Ralstonia metallidurans) protein is Large ribosomal subunit protein uL24.